Here is a 176-residue protein sequence, read N- to C-terminus: Ferritin heavy polypeptide-like 17E (176 aa).

Positions 10-159 (QNYDWQCEDA…GYLTNLRQMG (150 aa)) constitute a Ferritin-like diiron domain. Residues Cys-27, Glu-107, and Gln-141 each contribute to the Fe cation site.

Belongs to the ferritin family. As to expression, expressed in the testes and spermatogonia.

The polypeptide is Ferritin heavy polypeptide-like 17E (Mus musculus (Mouse)).